A 476-amino-acid chain; its full sequence is Doublecortin domain-containing protein 2 (476 aa).

Doublecortin domains follow at residues 17–100 (KSVL…LNYL) and 139–221 (CTIF…LPYS). The segment at 234–476 (FGQKASSLPP…QQNKDYAAVA (243 aa)) is disordered. Positions 261 to 272 (STVGSSDNSSPQ) are enriched in polar residues. The residue at position 270 (S270) is a Phosphoserine. The segment covering 279–289 (KKEDVNSEKLT) has biased composition (basic and acidic residues). Residues 296-306 (KLKNSQETIPN) show a composition bias toward polar residues. Residues 354-366 (EKANKDAEQKEDF) show a composition bias toward basic and acidic residues. Residues 415–426 (ELQQVNNELQLV) are compositionally biased toward low complexity. Residues 446-455 (DPQRPPRPEV) show a composition bias toward basic and acidic residues.

In terms of assembly, interacts with DVL1, DVL2 and DVL3. As to expression, ubiquitously expressed. In brain, highly expressed in the entorhinal cortex, inferior temporal cortex, medial temporal cortex, hypothalamus, amygdala and hippocampus. Expressed in liver by cholangiocytes, the epithelial cells of the bile ducts (at protein level).

The protein resides in the cell projection. It localises to the cilium. The protein localises to the cytoplasm. Its subcellular location is the cytoskeleton. It is found in the cilium axoneme. The protein resides in the kinocilium. In terms of biological role, protein that plays a role in the inhibition of canonical Wnt signaling pathway. May be involved in neuronal migration during development of the cerebral neocortex. Involved in the control of ciliogenesis and ciliary length. The chain is Doublecortin domain-containing protein 2 (DCDC2) from Homo sapiens (Human).